The sequence spans 253 residues: Imidazole glycerol phosphate synthase subunit HisF (253 aa).

Active-site residues include D11 and D130.

The protein belongs to the HisA/HisF family. In terms of assembly, heterodimer of HisH and HisF.

The protein localises to the cytoplasm. The catalysed reaction is 5-[(5-phospho-1-deoxy-D-ribulos-1-ylimino)methylamino]-1-(5-phospho-beta-D-ribosyl)imidazole-4-carboxamide + L-glutamine = D-erythro-1-(imidazol-4-yl)glycerol 3-phosphate + 5-amino-1-(5-phospho-beta-D-ribosyl)imidazole-4-carboxamide + L-glutamate + H(+). It functions in the pathway amino-acid biosynthesis; L-histidine biosynthesis; L-histidine from 5-phospho-alpha-D-ribose 1-diphosphate: step 5/9. In terms of biological role, IGPS catalyzes the conversion of PRFAR and glutamine to IGP, AICAR and glutamate. The HisF subunit catalyzes the cyclization activity that produces IGP and AICAR from PRFAR using the ammonia provided by the HisH subunit. This is Imidazole glycerol phosphate synthase subunit HisF from Ruegeria sp. (strain TM1040) (Silicibacter sp.).